A 229-amino-acid polypeptide reads, in one-letter code: uncharacterized protein (229 aa).

This is an uncharacterized protein from Borreliella burgdorferi (strain ATCC 35210 / DSM 4680 / CIP 102532 / B31) (Borrelia burgdorferi).